A 393-amino-acid chain; its full sequence is NAD(P)H-quinone oxidoreductase subunit H, chloroplastic (393 aa).

This sequence belongs to the complex I 49 kDa subunit family. NDH is composed of at least 16 different subunits, 5 of which are encoded in the nucleus.

The protein localises to the plastid. It is found in the chloroplast thylakoid membrane. The catalysed reaction is a plastoquinone + NADH + (n+1) H(+)(in) = a plastoquinol + NAD(+) + n H(+)(out). It carries out the reaction a plastoquinone + NADPH + (n+1) H(+)(in) = a plastoquinol + NADP(+) + n H(+)(out). NDH shuttles electrons from NAD(P)H:plastoquinone, via FMN and iron-sulfur (Fe-S) centers, to quinones in the photosynthetic chain and possibly in a chloroplast respiratory chain. The immediate electron acceptor for the enzyme in this species is believed to be plastoquinone. Couples the redox reaction to proton translocation, and thus conserves the redox energy in a proton gradient. The polypeptide is NAD(P)H-quinone oxidoreductase subunit H, chloroplastic (Agrostis stolonifera (Creeping bentgrass)).